The primary structure comprises 286 residues: Phosphoribosylaminoimidazole-succinocarboxamide synthase (286 aa).

Belongs to the SAICAR synthetase family.

The catalysed reaction is 5-amino-1-(5-phospho-D-ribosyl)imidazole-4-carboxylate + L-aspartate + ATP = (2S)-2-[5-amino-1-(5-phospho-beta-D-ribosyl)imidazole-4-carboxamido]succinate + ADP + phosphate + 2 H(+). The protein operates within purine metabolism; IMP biosynthesis via de novo pathway; 5-amino-1-(5-phospho-D-ribosyl)imidazole-4-carboxamide from 5-amino-1-(5-phospho-D-ribosyl)imidazole-4-carboxylate: step 1/2. This Pasteurella multocida (strain Pm70) protein is Phosphoribosylaminoimidazole-succinocarboxamide synthase (purC).